We begin with the raw amino-acid sequence, 47 residues long: Mu-theraphotoxin-An1a (47 aa).

3 disulfide bridges follow: Cys-4–Cys-34, Cys-8–Cys-39, and Cys-22–Cys-44.

In terms of processing, contains 3 disulfide bonds. In terms of tissue distribution, expressed by the venom gland.

Its subcellular location is the secreted. Its function is as follows. Is toxic to insects. Reduces amplitude and frequency of spontaneous firing and inhibits voltage-gated sodium current (Nav) in the dorsal unpaired median (DUM) neurons of P.americana. The sequence is that of Mu-theraphotoxin-An1a from Acanthoscurria natalensis (Tarantula spider).